A 513-amino-acid chain; its full sequence is uncharacterized protein (513 aa).

A compositionally biased stretch (basic and acidic residues) spans 1-16 (MPREHDSKYHRERDMR). The disordered stretch occupies residues 1–21 (MPREHDSKYHRERDMRSGLQE).

This is an uncharacterized protein from Sinorhizobium fredii (strain NBRC 101917 / NGR234).